The sequence spans 129 residues: Insulin-like growth factor 2 (129 aa).

The signal sequence occupies residues 1 to 24 (MGVPMGKSLLAPLTFLALASCCFA). The segment at 25 to 52 (AYRPSETLCGGELVDTLQFVCGDRGFYF) is b. 3 disulfide bridges follow: C33/C72, C45/C85, and C71/C76. The tract at residues 53-65 (SRPASRVSRRSSR) is c. Residues 66-86 (GIVEECCFRSCDLALLETYCA) form an a region. Residues 87–92 (TPAKSE) are d. Positions 93 to 129 (RDVSTPPTVLPDNFPRYPVGKFFQYDTWKQSAQRLRR) are cleaved as a propeptide — e peptide.

This sequence belongs to the insulin family. As to quaternary structure, interacts with MYORG; this interaction is required for IGF2 secretion. Interacts with integrins ITGAV:ITGB3 and ITGA6:ITGB4; integrin-binding is required for IGF2 signaling. Proteolytically processed by PCSK4, proIGF2 is cleaved at Arg-129 and Arg-92 to generate big-IGF2 and mature IGF2.

The protein localises to the secreted. In terms of biological role, the insulin-like growth factors possess growth-promoting activity. Major fetal growth hormone in mammals. Plays a key role in regulating fetoplacental development. IGF2 is influenced by placental lactogen. Also involved in tissue differentiation. In adults, involved in glucose metabolism in adipose tissue, skeletal muscle and liver. Acts as a ligand for integrin which is required for IGF2 signaling. Positively regulates myogenic transcription factor MYOD1 function by facilitating the recruitment of transcriptional coactivators, thereby controlling muscle terminal differentiation. Inhibits myoblast differentiation and modulates metabolism via increasing the mitochondrial respiration rate. Functionally, preptin undergoes glucose-mediated co-secretion with insulin, and acts as a physiological amplifier of glucose-mediated insulin secretion. Exhibits osteogenic properties by increasing osteoblast mitogenic activity through phosphoactivation of MAPK1 and MAPK3. This is Insulin-like growth factor 2 from Neovison vison (American mink).